The chain runs to 342 residues: Biotin synthase (342 aa).

The 226-residue stretch at 63–288 folds into the Radical SAM core domain; sequence PEVEVEGIIS…RTMLRFAGGR (226 aa). [4Fe-4S] cluster-binding residues include Cys-78, Cys-82, and Cys-85. 4 residues coordinate [2Fe-2S] cluster: Cys-121, Cys-154, Cys-213, and Arg-283.

It belongs to the radical SAM superfamily. Biotin synthase family. Homodimer. Requires [4Fe-4S] cluster as cofactor. It depends on [2Fe-2S] cluster as a cofactor.

It carries out the reaction (4R,5S)-dethiobiotin + (sulfur carrier)-SH + 2 reduced [2Fe-2S]-[ferredoxin] + 2 S-adenosyl-L-methionine = (sulfur carrier)-H + biotin + 2 5'-deoxyadenosine + 2 L-methionine + 2 oxidized [2Fe-2S]-[ferredoxin]. It participates in cofactor biosynthesis; biotin biosynthesis; biotin from 7,8-diaminononanoate: step 2/2. Catalyzes the conversion of dethiobiotin (DTB) to biotin by the insertion of a sulfur atom into dethiobiotin via a radical-based mechanism. This Mycobacteroides abscessus (strain ATCC 19977 / DSM 44196 / CCUG 20993 / CIP 104536 / JCM 13569 / NCTC 13031 / TMC 1543 / L948) (Mycobacterium abscessus) protein is Biotin synthase.